The primary structure comprises 93 residues: MSLKEVITSLKNDFHSINKEIDSMKENNEKQEEKIFQEIKKLKLEMELLRKDNLSFKTTIQSLSDSINSLSSVESTYDSDIYYNDDEYSTIYL.

The stretch at 2-58 forms a coiled coil; that stretch reads SLKEVITSLKNDFHSINKEIDSMKENNEKQEEKIFQEIKKLKLEMELLRKDNLSFKT.

Belongs to the UPF0521 family.

The protein is UPF0521 protein B of Dictyostelium discoideum (Social amoeba).